The primary structure comprises 299 residues: Protoheme IX farnesyltransferase (299 aa).

9 consecutive transmembrane segments (helical) span residues Val26–Leu46, Phe53–Ile73, Leu94–Leu114, Leu121–Leu141, Ile149–Gly169, Ala175–Leu195, Tyr217–Ile239, Gly243–Leu265, and Phe277–Leu297.

Belongs to the UbiA prenyltransferase family. Protoheme IX farnesyltransferase subfamily.

It is found in the cell inner membrane. The catalysed reaction is heme b + (2E,6E)-farnesyl diphosphate + H2O = Fe(II)-heme o + diphosphate. Its pathway is porphyrin-containing compound metabolism; heme O biosynthesis; heme O from protoheme: step 1/1. In terms of biological role, converts heme B (protoheme IX) to heme O by substitution of the vinyl group on carbon 2 of heme B porphyrin ring with a hydroxyethyl farnesyl side group. The protein is Protoheme IX farnesyltransferase of Azoarcus sp. (strain BH72).